Reading from the N-terminus, the 150-residue chain is Protein Smg homolog (150 aa).

Belongs to the Smg family.

The chain is Protein Smg homolog from Leptothrix cholodnii (strain ATCC 51168 / LMG 8142 / SP-6) (Leptothrix discophora (strain SP-6)).